A 493-amino-acid chain; its full sequence is Angiopoietin-related protein 2 (493 aa).

Residues 1 to 22 (MRPLCVTCWWLGLLAAMGAVAG) form the signal peptide. 2 coiled-coil regions span residues 76–115 (PEVL…VDGG) and 152–206 (ALEL…HCQR). N-linked (GlcNAc...) asparagine glycans are attached at residues asparagine 164 and asparagine 192. Positions 269 to 489 (DKPSGPWRDC…KVVMMIRPNP (221 aa)) constitute a Fibrinogen C-terminal domain. Disulfide bonds link cysteine 278/cysteine 307 and cysteine 430/cysteine 443.

In terms of processing, N-glycosylated. As to expression, widely expressed in heart, small intestine, spleen and stomach. Also found in lower levels in colon, ovary, adrenal gland, skeletal muscle and in prostate.

The protein resides in the secreted. In terms of biological role, induces sprouting in endothelial cells through an autocrine and paracrine action. The protein is Angiopoietin-related protein 2 (ANGPTL2) of Homo sapiens (Human).